A 345-amino-acid polypeptide reads, in one-letter code: Cytoskeleton protein RodZ (345 aa).

Residues 1–111 (MNTEASQDQT…LGKKHKKRDG (111 aa)) lie on the Cytoplasmic side of the membrane. An HTH cro/C1-type domain is found at 19 to 79 (LRQARESLGL…KLVHLPEDEL (61 aa)). A DNA-binding region (H-T-H motif) is located at residues 30-49 (QQTVAERLCLKVSTIRDIEE). Residues 112 to 132 (WLMSFTWLIVLVVLGLTGAWW) form a helical; Signal-anchor for type II membrane protein membrane-spanning segment. Over 133-345 (WQNHQAQQAE…RVARLTVCVE (213 aa)) the chain is Periplasmic. A disordered region spans residues 151–259 (SAQLSQNGGQ…PLPTADAGVS (109 aa)). The segment covering 188–225 (PLTNHSGSAITNSATTSSVPKTTSTEPVDTANTNTTMH) has biased composition (polar residues). Positions 229 to 241 (AASAAVSPSQVPQ) are enriched in low complexity.

It belongs to the RodZ family.

It is found in the cell inner membrane. Functionally, cytoskeletal protein that is involved in cell-shape control through regulation of the length of the long axis. The chain is Cytoskeleton protein RodZ from Yersinia pestis bv. Antiqua (strain Antiqua).